The chain runs to 776 residues: 3-isopropylmalate dehydratase (776 aa).

[4Fe-4S] cluster-binding residues include cysteine 357, cysteine 418, and cysteine 421. Basic and acidic residues predominate over residues serine 482–aspartate 493. Disordered stretches follow at residues serine 482–alanine 518 and aspartate 525–alanine 544. Polar residues predominate over residues proline 527 to serine 538.

It belongs to the aconitase/IPM isomerase family. In terms of assembly, monomer. [4Fe-4S] cluster is required as a cofactor.

The catalysed reaction is (2R,3S)-3-isopropylmalate = (2S)-2-isopropylmalate. It participates in amino-acid biosynthesis; L-leucine biosynthesis; L-leucine from 3-methyl-2-oxobutanoate: step 2/4. Its function is as follows. Catalyzes the isomerization between 2-isopropylmalate and 3-isopropylmalate, via the formation of 2-isopropylmaleate. In Eremothecium gossypii (strain ATCC 10895 / CBS 109.51 / FGSC 9923 / NRRL Y-1056) (Yeast), this protein is 3-isopropylmalate dehydratase (LEU1).